Reading from the N-terminus, the 126-residue chain is Probable DNA-directed RNA polymerase II subunit RPB11 (126 aa).

Belongs to the archaeal Rpo11/eukaryotic RPB11/RPC19 RNA polymerase subunit family. In terms of assembly, component of the RNA polymerase II (Pol II) complex consisting of 12 subunits.

The protein resides in the nucleus. In terms of biological role, DNA-dependent RNA polymerase catalyzes the transcription of DNA into RNA using the four ribonucleoside triphosphates as substrates. Component of RNA polymerase II which synthesizes mRNA precursors and many functional non-coding RNAs. Pol II is the central component of the basal RNA polymerase II transcription machinery. It is composed of mobile elements that move relative to each other. RPB11 is part of the core element with the central large cleft. In Plasmodium chabaudi chabaudi, this protein is Probable DNA-directed RNA polymerase II subunit RPB11.